The chain runs to 379 residues: Armadillo repeat-containing X-linked protein 3 (379 aa).

Over Met-1–Lys-6 the chain is Mitochondrial intermembrane. 2 mitochondrion outer membrane (MOM)-targeting sequence regions span residues Met-1 to Lys-6 and Arg-26 to Lys-37. A helical; Signal-anchor transmembrane segment spans residues Val-7–Arg-29. Residues Gly-30–Glu-379 lie on the Cytoplasmic side of the membrane. Phosphoserine is present on residues Ser-61, Ser-67, and Ser-72. The interval Arg-89–Ala-98 is nuclear localization signal. Ser-110 is subject to Phosphoserine. ARM repeat units lie at residues Pro-111–Ala-151, Ala-153–Val-192, and Val-233–Glu-272.

It belongs to the eutherian X-chromosome-specific Armcx family. Interacts (via ARM domain) with MIRO1, MIRO2 and TRAK2. The interaction with Miro is calcium-dependent. Interacts with SOX10.

It localises to the mitochondrion outer membrane. Its subcellular location is the cytoplasm. It is found in the nucleus. Its function is as follows. Regulates mitochondrial aggregation and transport in axons in living neurons. May link mitochondria to the TRAK2-kinesin motor complex via its interaction with Miro and TRAK2. Mitochondrial distribution and dynamics is regulated through ARMCX3 protein degradation, which is promoted by PCK and negatively regulated by WNT1. Enhances the SOX10-mediated transactivation of the neuronal acetylcholine receptor subunit alpha-3 and beta-4 subunit gene promoters. The sequence is that of Armadillo repeat-containing X-linked protein 3 (ARMCX3) from Pongo abelii (Sumatran orangutan).